Consider the following 259-residue polypeptide: MELLAKTRKLNALLQSAAGKPVNFREMSDTMCEVIEANVFVVSRRGKLLGYAIHQQIENERMKQMLAERQFPEEYTQSLFNITETSSNLDVNSAYTAFPVENKELFGQGLTTIVPIVGGGERLGTLVLARLGQEFLDDDLILAEYSSTVVGMEILREKAEEIEEEARSKAVVQMAISSLSYSELEAIEHIFEELNGTEGLLVASKIADRVGITRSVIVNALRKLESAGVIESRSLGMKGTYIKVLNDKFLHELAKLKTN.

The tract at residues 1–155 (MELLAKTRKL…SSTVVGMEIL (155 aa)) is GAF domain. The H-T-H motif DNA-binding region spans 203–222 (ASKIADRVGITRSVIVNALR). Position 215 is a phosphoserine (S215).

This sequence belongs to the CodY family.

The protein localises to the cytoplasm. Functionally, DNA-binding global transcriptional regulator which is involved in the adaptive response to starvation and acts by directly or indirectly controlling the expression of numerous genes in response to nutrient availability. During rapid exponential growth, CodY is highly active and represses genes whose products allow adaptation to nutrient depletion. In Bacillus anthracis (strain A0248), this protein is Global transcriptional regulator CodY.